We begin with the raw amino-acid sequence, 164 residues long: Lipoprotein signal peptidase (164 aa).

4 consecutive transmembrane segments (helical) span residues 12–32 (WLWL…LILQ), 42–62 (LFPS…SFLA), 70–90 (WFFA…MYRS), and 102–122 (ALII…GFVV). Residues aspartate 123 and aspartate 141 contribute to the active site. Residues 137 to 157 (FNLADTAICVGAALIVLEGFL) form a helical membrane-spanning segment.

The protein belongs to the peptidase A8 family.

The protein localises to the cell inner membrane. The enzyme catalyses Release of signal peptides from bacterial membrane prolipoproteins. Hydrolyzes -Xaa-Yaa-Zaa-|-(S,diacylglyceryl)Cys-, in which Xaa is hydrophobic (preferably Leu), and Yaa (Ala or Ser) and Zaa (Gly or Ala) have small, neutral side chains.. Its pathway is protein modification; lipoprotein biosynthesis (signal peptide cleavage). Its function is as follows. This protein specifically catalyzes the removal of signal peptides from prolipoproteins. The polypeptide is Lipoprotein signal peptidase (Shigella flexneri serotype 5b (strain 8401)).